A 179-amino-acid chain; its full sequence is Inner membrane-spanning protein YciB (179 aa).

A run of 5 helical transmembrane segments spans residues 22–42, 50–70, 76–96, 121–141, and 149–169; these read IYAATSALIVATAIVLIYSWV, MALITFVLVAVFGGLTLFFHN, WKVTVIYALFAGALLISQWVM, LAWALFFIACGLANIYIAFWL, and FKVFGLTALTLIFTLLSGVYI.

It belongs to the YciB family.

It localises to the cell inner membrane. Functionally, plays a role in cell envelope biogenesis, maintenance of cell envelope integrity and membrane homeostasis. The sequence is that of Inner membrane-spanning protein YciB from Salmonella agona (strain SL483).